Reading from the N-terminus, the 243-residue chain is MSGHSKWHNIQGRKNAQDAKRGKVFQKLSREIYMAAKSGGPDPLGNPRLRLAVDKARAANMPKDNIQRAIKKAEGNSDEHYDEVTYEGYAPGGVAILVEALTDNKNRTASSVRVAFTRNGGSLGATGSVAYMFDRKGYIVIDRSTTDADEDQMLMDVMEAGGDDLQTSDDAYEIYTDAKSFTAVRDALEKAGYQLAVSELTMVPQNTTPVPADKKEQFEKLVDALEDDDDVSNVYTAAADEEE.

A disordered region spans residues 1–22 (MSGHSKWHNIQGRKNAQDAKRG).

Belongs to the TACO1 family.

Its subcellular location is the cytoplasm. In Lactobacillus delbrueckii subsp. bulgaricus (strain ATCC 11842 / DSM 20081 / BCRC 10696 / JCM 1002 / NBRC 13953 / NCIMB 11778 / NCTC 12712 / WDCM 00102 / Lb 14), this protein is Probable transcriptional regulatory protein Ldb0677.